The following is a 225-amino-acid chain: uncharacterized protein (225 aa).

The next 6 helical transmembrane spans lie at 25–45 (MMLA…IPFL), 57–77 (VFLI…ITVA), 83–103 (FIWD…NFAI), 109–129 (LYFH…SLAT), 135–155 (LLTT…FGYV), and 187–207 (IFAL…LIGV).

The protein resides in the cell membrane. This is an uncharacterized protein from Mycoplasma pneumoniae (strain ATCC 29342 / M129 / Subtype 1) (Mycoplasmoides pneumoniae).